We begin with the raw amino-acid sequence, 434 residues long: Protein phosphatase 2C 56 (434 aa).

One can recognise a PPM-type phosphatase domain in the interval 128–422 (LYGFTSICGR…DNISVVVVDL (295 aa)). Mg(2+) contacts are provided by aspartate 177, aspartate 261, serine 262, aspartate 347, and aspartate 413. The Nuclear localization signal signature appears at 423 to 427 (KPRRK).

This sequence belongs to the PP2C family. As to quaternary structure, interacts with SPK1, ATHB-6, CIPK15/PKS3, GPX3, SRK2E/OST1, SRK2D, SRK2I, SCAR1, SCAR2, SCAR3 and SCARL. Binds to the PA released by the phospholipase D alpha 1 (PLDALPHA1) in response to ABA during the stomatal closure regulation. Interacts with ABA-bounded PYR1, PYL1, PYL2, PYL3, PYL4, PYL5, PYL6, PYL7, PYL8, PYL9, PYL10, and with free PYL2, PYL3, PYL4 and PYL13. Binds to RPL12B, CPK21 and CPK23. Binds to MAPKKK18. Interacts with KIN10. Interacts with phosphorylated PYL8/RCAR3. Requires Mg(2+) as cofactor. Mn(2+) serves as cofactor. In terms of tissue distribution, expressed in seeds and seedlings. In roots, confined to lateral root caps and columella cells.

It localises to the nucleus. Its subcellular location is the cytoplasm. It is found in the cell membrane. It carries out the reaction O-phospho-L-seryl-[protein] + H2O = L-seryl-[protein] + phosphate. The catalysed reaction is O-phospho-L-threonyl-[protein] + H2O = L-threonyl-[protein] + phosphate. Its activity is regulated as follows. Phosphatase activity repressed by oxidized GPX3 and phosphatidic acid (PA). PA is produced by PLD alpha 1 in response to ABA. Repressed by PYR/PYL/RCAR ABA receptors in an ABA-dependent manner. In terms of biological role, key component and repressor of the abscisic acid (ABA) signaling pathway that regulates numerous ABA responses, such as stomatal closure, osmotic water permeability of the plasma membrane (Pos), drought-induced resistance and rhizogenesis, response to glucose, high light stress, seed germination and inhibition of vegetative growth. During the stomatal closure regulation, modulates the inward calcium-channel permeability as well as the actin reorganization in guard cells in response to ABA. Involved in the resistance to the bacterial pathogen Pseudomonas syringae pv. tomato. Controls negatively fibrillin expression that is involved in mediating ABA-induced photoprotection. May be involved in ABA content regulation. Plays a role in the Pro accumulation in response to reduced water availability (low water potential). Required for the ABA negative regulation of the ethylene-induced hyponastic growth. Involved in acquired thermotolerance of root growth and seedling survival. Activates/represses SRK2E/OST1 in response to ABA-dependent stimuli, especially in stomata closure regulation involving SLAC1. Represses MAPKKK18 activity and promotes MAPKKK18 degradation by the proteasome pathway upon abscisic acid (ABA) treatment. Represses KIN10 activity by the specific dephosphorylation of its T-loop Thr-198, leading to a poststress inactivation of SnRK1 signaling. Restricts MAPKKK20 activity by dephosphorylation. The sequence is that of Protein phosphatase 2C 56 from Arabidopsis thaliana (Mouse-ear cress).